A 103-amino-acid polypeptide reads, in one-letter code: Large ribosomal subunit protein bL21 (103 aa).

It belongs to the bacterial ribosomal protein bL21 family. As to quaternary structure, part of the 50S ribosomal subunit. Contacts protein L20.

Its function is as follows. This protein binds to 23S rRNA in the presence of protein L20. The chain is Large ribosomal subunit protein bL21 from Thioalkalivibrio sulfidiphilus (strain HL-EbGR7).